Reading from the N-terminus, the 231-residue chain is AA9 family lytic polysaccharide monooxygenase C (231 aa).

A signal peptide spans 1–18; it reads MKSGLLFTTASLALTASA. Histidine 19 contacts Cu(2+). The cysteines at positions 60 and 179 are disulfide-linked. 2 N-linked (GlcNAc...) asparagine glycosylation sites follow: asparagine 69 and asparagine 143. Residues histidine 165 and glutamine 174 each contribute to the O2 site. Residue tyrosine 176 participates in Cu(2+) binding.

It belongs to the polysaccharide monooxygenase AA9 family. Cu(2+) is required as a cofactor.

The protein localises to the secreted. It catalyses the reaction [(1-&gt;4)-beta-D-glucosyl]n+m + reduced acceptor + O2 = 4-dehydro-beta-D-glucosyl-[(1-&gt;4)-beta-D-glucosyl]n-1 + [(1-&gt;4)-beta-D-glucosyl]m + acceptor + H2O.. Functionally, lytic polysaccharide monooxygenase (LPMO) that depolymerizes crystalline and amorphous polysaccharides via the oxidation of scissile alpha- or beta-(1-4)-glycosidic bonds, yielding C1 oxidation products. Catalysis by LPMOs requires the reduction of the active-site copper from Cu(II) to Cu(I) by a reducing agent and H(2)O(2) or O(2) as a cosubstrate. In Emericella nidulans (strain FGSC A4 / ATCC 38163 / CBS 112.46 / NRRL 194 / M139) (Aspergillus nidulans), this protein is AA9 family lytic polysaccharide monooxygenase C.